The chain runs to 298 residues: 4-hydroxy-tetrahydrodipicolinate synthase (298 aa).

T48 contributes to the pyruvate binding site. Y137 acts as the Proton donor/acceptor in catalysis. K166 serves as the catalytic Schiff-base intermediate with substrate. Residue I207 coordinates pyruvate.

The protein belongs to the DapA family. As to quaternary structure, homotetramer; dimer of dimers.

It localises to the cytoplasm. The catalysed reaction is L-aspartate 4-semialdehyde + pyruvate = (2S,4S)-4-hydroxy-2,3,4,5-tetrahydrodipicolinate + H2O + H(+). The protein operates within amino-acid biosynthesis; L-lysine biosynthesis via DAP pathway; (S)-tetrahydrodipicolinate from L-aspartate: step 3/4. Catalyzes the condensation of (S)-aspartate-beta-semialdehyde [(S)-ASA] and pyruvate to 4-hydroxy-tetrahydrodipicolinate (HTPA). In Campylobacter jejuni subsp. jejuni serotype O:6 (strain 81116 / NCTC 11828), this protein is 4-hydroxy-tetrahydrodipicolinate synthase.